The following is a 63-amino-acid chain: Large ribosomal subunit protein bL28 (63 aa).

It belongs to the bacterial ribosomal protein bL28 family.

This is Large ribosomal subunit protein bL28 (rpmB) from Selenomonas ruminantium.